Reading from the N-terminus, the 170-residue chain is MGTDDRLPDRPGADDPGRGRRIGIDVGTVRIGVASSDPDGILATPVETVARDKRDKTGKHVRRLAALVKEYEAVEVIVGLPRTLGDRASASAHDAVDVAEQLARRIAPTPVRLADERLTTVSAQRSLREAGVRARGQKAVIDQVAAVGILQGWLDQRRAALAARREGTDG.

Residues 1-18 show a composition bias toward basic and acidic residues; that stretch reads MGTDDRLPDRPGADDPGR. The tract at residues 1–22 is disordered; the sequence is MGTDDRLPDRPGADDPGRGRRI.

This sequence belongs to the YqgF nuclease family.

The protein resides in the cytoplasm. In terms of biological role, could be a nuclease involved in processing of the 5'-end of pre-16S rRNA. The polypeptide is Putative pre-16S rRNA nuclease (Mycolicibacterium smegmatis (strain ATCC 700084 / mc(2)155) (Mycobacterium smegmatis)).